A 425-amino-acid polypeptide reads, in one-letter code: MFIDKARIFVKAGNGGNGSVAFRREKYVPAGGPDGGDGGRGASIIFEVDLGLRTLMDFKYQKKYQAQNGGDGSKGKRAGKNGENLVLKVPAGTVIRDEATGLVLADLKKEGDTAIVAKGGIGGKGNQHFANAVRQAPAFAKSGTDGEERWITLELKMIADVGLLGFPNVGKSTFLSVVTKAKPKIANYHFTTLTPNLGVVQTKFGDSFVLADIPGIIEGASEGIGLGHEFLRHVERTKVLIHIVDISGLEGRDPIEDFDKINDELKLYNEKLSKRPQVVVANKFDILEDESKFEKFKSELEGRGYTVFKMSAATRQGIDEVIAYVSKMLKEVEDVELVSEEEMYRPELDIGTEEELSIDIEDGVYVVTGKALRRIMYSVNFDDMESLQYFQKAMESQGVFDRLREMGIEDGDVVKIYELEFEFYN.

An Obg domain is found at 1–158 (MFIDKARIFV…RWITLELKMI (158 aa)). Residues 159–330 (ADVGLLGFPN…VIAYVSKMLK (172 aa)) enclose the OBG-type G domain. GTP contacts are provided by residues 165–172 (GFPNVGKS), 190–194 (FTTLT), 212–215 (DIPG), 282–285 (NKFD), and 311–313 (SAA). Positions 172 and 192 each coordinate Mg(2+). Residues 344 to 425 (YRPELDIGTE…IYELEFEFYN (82 aa)) form the OCT domain.

Belongs to the TRAFAC class OBG-HflX-like GTPase superfamily. OBG GTPase family. In terms of assembly, monomer. Requires Mg(2+) as cofactor.

The protein localises to the cytoplasm. An essential GTPase which binds GTP, GDP and possibly (p)ppGpp with moderate affinity, with high nucleotide exchange rates and a fairly low GTP hydrolysis rate. Plays a role in control of the cell cycle, stress response, ribosome biogenesis and in those bacteria that undergo differentiation, in morphogenesis control. This Clostridioides difficile (strain 630) (Peptoclostridium difficile) protein is GTPase Obg.